We begin with the raw amino-acid sequence, 210 residues long: Ribosomal RNA large subunit methyltransferase E (210 aa).

The S-adenosyl-L-methionine site is built by Gly67, Trp69, Asp87, Asp103, and Asp128. The active-site Proton acceptor is the Lys168.

It belongs to the class I-like SAM-binding methyltransferase superfamily. RNA methyltransferase RlmE family.

The protein resides in the cytoplasm. The catalysed reaction is uridine(2552) in 23S rRNA + S-adenosyl-L-methionine = 2'-O-methyluridine(2552) in 23S rRNA + S-adenosyl-L-homocysteine + H(+). Specifically methylates the uridine in position 2552 of 23S rRNA at the 2'-O position of the ribose in the fully assembled 50S ribosomal subunit. The sequence is that of Ribosomal RNA large subunit methyltransferase E from Psychrobacter arcticus (strain DSM 17307 / VKM B-2377 / 273-4).